The primary structure comprises 172 residues: Large ribosomal subunit protein uL10 (172 aa).

The protein belongs to the universal ribosomal protein uL10 family. As to quaternary structure, part of the ribosomal stalk of the 50S ribosomal subunit. The N-terminus interacts with L11 and the large rRNA to form the base of the stalk. The C-terminus forms an elongated spine to which L12 dimers bind in a sequential fashion forming a multimeric L10(L12)X complex.

Its function is as follows. Forms part of the ribosomal stalk, playing a central role in the interaction of the ribosome with GTP-bound translation factors. The protein is Large ribosomal subunit protein uL10 of Idiomarina loihiensis (strain ATCC BAA-735 / DSM 15497 / L2-TR).